Reading from the N-terminus, the 577-residue chain is MNIQSLINDKVSQALEAAGAPAGSPAAVRQSAKAQFGDYQANGVMGVAKRLGTNPREFAQKVLDVLDLDGIASKTEIAGPGFINIFLSEEFLAKQAEAALADERLGVALETKQNIVADYSAPNVAKEMHVGHLRSTIIGDAVVRTLEFLGHNVTRANHIGDWGTQFGMLIANLERIQKEKGEVSMELSDLEGFYRESKKLYDEDEEFAVTARGYVVKLQGGDAFCADMWKKLVDVTMVQNQRNYDRLNVSLTRDNVMGESMYNSMLAPIVADLQEKGLAVESDGAQVVYLDEYKNKDGDPMGVIVQKRDGGFLYTTTDIACAKYRFEELNADRVLYFIDSRQHQHLMQAWTIVRKAGYVPESVSLEHHAFGMMLGKDGRPFKTRAGGTVRLADLLDEAEQRAIALIEEKNKDLSTEEKAKIATTVAMAAVKYSDLSKHRTTDYIFDWDNILAFEGNTAPYMQYAYTRVASIFSKADLSMDNLAGEVKITDEKEKALITKLMQFEEAVQAVASEGQPHLMCAYLFELAGQFSSFYEACPILNNDDESIKQSRLKLAALTAKTIKQGLDLLGIETLERM.

A 'HIGH' region motif is present at residues 122–132 (PNVAKEMHVGH).

Belongs to the class-I aminoacyl-tRNA synthetase family. As to quaternary structure, monomer.

It localises to the cytoplasm. The catalysed reaction is tRNA(Arg) + L-arginine + ATP = L-arginyl-tRNA(Arg) + AMP + diphosphate. The polypeptide is Arginine--tRNA ligase (Aliivibrio salmonicida (strain LFI1238) (Vibrio salmonicida (strain LFI1238))).